Here is a 481-residue protein sequence, read N- to C-terminus: GTPase Der (481 aa).

2 consecutive EngA-type G domains span residues 3–166 and 194–367; these read PVVA…ESDF and IKLA…MSAT. GTP-binding positions include 9–16, 56–60, 118–121, 200–207, 247–251, and 312–315; these read GRPNVGKS, DTGGI, NKVD, GKPNVGKS, DTAGV, and NKWD. Positions 368 to 452 constitute a KH-like domain; it reads KRINTALLTQ…PIKIEFREGN (85 aa).

This sequence belongs to the TRAFAC class TrmE-Era-EngA-EngB-Septin-like GTPase superfamily. EngA (Der) GTPase family. Associates with the 50S ribosomal subunit.

GTPase that plays an essential role in the late steps of ribosome biogenesis. The protein is GTPase Der of Alteromonas mediterranea (strain DSM 17117 / CIP 110805 / LMG 28347 / Deep ecotype).